The chain runs to 605 residues: Probable potassium transport system protein Kup 3 (605 aa).

12 consecutive transmembrane segments (helical) span residues 16–36 (ALGL…TVIF), 49–69 (ILSL…AWLA), 97–117 (VAFA…DAVI), 138–158 (GLST…LFSV), 170–190 (FGPI…VSAF), 212–232 (GLAG…GEAL), 247–267 (AWHF…VFAI), 287–307 (LYIP…QAII), 339–359 (IYLG…MLVF), 368–388 (AYGM…IIVF), 397–417 (ALVA…TFSK), and 418–438 (LPHG…TIII).

It belongs to the HAK/KUP transporter (TC 2.A.72) family.

Its subcellular location is the cell inner membrane. It catalyses the reaction K(+)(in) + H(+)(in) = K(+)(out) + H(+)(out). Its function is as follows. Transport of potassium into the cell. Likely operates as a K(+):H(+) symporter. The protein is Probable potassium transport system protein Kup 3 of Geobacter sulfurreducens (strain ATCC 51573 / DSM 12127 / PCA).